Here is a 95-residue protein sequence, read N- to C-terminus: MFMTTYFDTRKNFCEVVFSKAPKDLPAHLQLTSESIKNYVDVVCPLEFRTVNGRDTLAITKLNREIDIDPSIAREINISDIGGGNVKSHGFQMRF.

This is an uncharacterized protein from Enterobacteria phage T4 (Bacteriophage T4).